Reading from the N-terminus, the 110-residue chain is uncharacterized protein (110 aa).

This is an uncharacterized protein from Saccharomyces cerevisiae (strain ATCC 204508 / S288c) (Baker's yeast).